Consider the following 422-residue polypeptide: Tyrosine--tRNA ligase 1 (422 aa).

An L-tyrosine-binding site is contributed by Tyr36. Residues 41-50 (PTAGSLHIGH) carry the 'HIGH' region motif. Positions 173 and 177 each coordinate L-tyrosine. Residues 233–237 (KFGKT) carry the 'KMSKS' region motif. Lys236 is a binding site for ATP. An S4 RNA-binding domain is found at 355-419 (SDVVTLLLET…GKKQFAMVKL (65 aa)).

This sequence belongs to the class-I aminoacyl-tRNA synthetase family. TyrS type 1 subfamily. As to quaternary structure, homodimer.

The protein resides in the cytoplasm. It catalyses the reaction tRNA(Tyr) + L-tyrosine + ATP = L-tyrosyl-tRNA(Tyr) + AMP + diphosphate + H(+). Its function is as follows. Catalyzes the attachment of tyrosine to tRNA(Tyr) in a two-step reaction: tyrosine is first activated by ATP to form Tyr-AMP and then transferred to the acceptor end of tRNA(Tyr). This Vibrio vulnificus (strain YJ016) protein is Tyrosine--tRNA ligase 1.